Consider the following 181-residue polypeptide: Protein Syd (181 aa).

The protein belongs to the Syd family.

It is found in the cell inner membrane. Functionally, interacts with the SecY protein in vivo. May bind preferentially to an uncomplexed state of SecY, thus functioning either as a chelating agent for excess SecY in the cell or as a regulatory factor that negatively controls the translocase function. This chain is Protein Syd, found in Shigella dysenteriae serotype 1 (strain Sd197).